Reading from the N-terminus, the 151-residue chain is Putative pre-16S rRNA nuclease (151 aa).

The protein belongs to the YqgF nuclease family.

The protein localises to the cytoplasm. Its function is as follows. Could be a nuclease involved in processing of the 5'-end of pre-16S rRNA. The protein is Putative pre-16S rRNA nuclease of Gloeothece citriformis (strain PCC 7424) (Cyanothece sp. (strain PCC 7424)).